The primary structure comprises 677 residues: Beta-galactosidase (677 aa).

Residues Met-1 to Gly-23 form the signal peptide. A propeptide spanning residues Leu-24 to Thr-28 is cleaved from the precursor. N-linked (GlcNAc...) asparagine glycosylation is present at Asn-26. 3 residues coordinate substrate: Tyr-83, Glu-129, and Asn-187. Residue Glu-188 is the Proton donor of the active site. The cysteines at positions 195 and 230 are disulfide-linked. Asn-247 is a glycosylation site (N-linked (GlcNAc...) asparagine). Glu-268 (nucleophile) is an active-site residue. Tyr-333 contributes to the substrate binding site. N-linked (GlcNAc...) asparagine glycosylation is found at Asn-464, Asn-498, Asn-545, and Asn-555. Cys-626 and Cys-634 are oxidised to a cystine. Residues Ser-654–Val-677 are disordered. Residues Lys-668–Val-677 are compositionally biased toward basic and acidic residues.

It belongs to the glycosyl hydrolase 35 family. Homodimer. May form higher multimers.

The protein localises to the lysosome. It catalyses the reaction Hydrolysis of terminal non-reducing beta-D-galactose residues in beta-D-galactosides.. Cleaves beta-linked terminal galactosyl residues from gangliosides, glycoproteins, and glycosaminoglycans. This chain is Beta-galactosidase (GLB1), found in Pongo abelii (Sumatran orangutan).